A 316-amino-acid polypeptide reads, in one-letter code: Probable thioesterase lcsE (316 aa).

Belongs to the AMT4 thioesterase family.

It functions in the pathway secondary metabolite biosynthesis. Its function is as follows. Probable thioesterase; part of the gene cluster that mediates the biosynthesis of the lipopeptide antibiotics leucinostatins that show extensive biological activities, including antimalarial, antiviral, antibacterial, antifungal, and antitumor activities, as well as phytotoxic. Leucinostatin A contains nine amino acid residues, including the unusual amino acid 4-methyl-L-proline (MePro), 2-amino-6-hydroxy-4-methyl-8-oxodecanoic acid (AHyMeOA), 3-hydroxyleucine (HyLeu), alpha-aminoisobutyric acid (AIB), beta-Ala, a 4-methylhex-2-enoic acid at the N-terminus as well as a N1,N1-dimethylpropane-1,2-diamine (DPD) at the C-terminus. The biosynthesis of leucinostatins is probably initiated with the assembly of 4-methylhex-2-enoic acid by a reducing PKS. Two reducing polyketide synthases, lcsB and lcsC, have been identified in the cluster and it is not clear which is the one that assembles 4-methylhex-2-enoic acid since both contain KS, AT, DH, cMT, ER, KR and ACP domains. The polyketide residue might be transferred to the NRPS lcsA, mediated by two additional enzymes, the acyl-CoA ligase lcsD and the thioesterase lcsE. The linear polyketide carboxylic acid, which is released from PKS, is converted to a CoA thioester by lcsD, and then lcsE hydrolyzes the thiol bond and shuttles the polyketide intermediate to lcsA. The C domain of the first module catalyzed the condensation of 4-methylhex-2-enoic acid and MePro carried by domain A1, followed by successive condensations of nine amino acids to trigger the elongation of the linear peptide. A5 and A6 domains of lcsA are proposed to incorporate leucine, A2 AHyMeOA, and A3 incorporates HyLeu. A4, A7 and A8 incorporate AIB. The AHyMeOA in leucinostatin A activated by the A2 might be produced by the second PKS (lcsB or lcsC) present within the cluster. The MePro is probably produced via leucine cyclization and may originate from a separate pathway, independent of the cluster. Another nonproteinogenic amino acid, beta-Ala, could be produced by an aspartic acid decarboxylase also localized outside of the cluster. Two candidates are VFPBJ_01400 and VFPBJ_10476. The final peptide scaffold may be released by the NAD(P)H-dependent thioester reductase (TE) at the C-terminal region of lcsA. Transamination of the lcsA product by the transaminase lcsP may produce DPD at the C-terminus. Further hydroxylation steps performed alternatively by the cytochrome P450 monooxygenases lcsI, lcsK and lcsN then yield the non-methylated leucinostatins precursor. It is also possible that leucines can be hydroxylated prior to their incorporation into the peptide. Varying extents of methylation then lead to the formation of leucinostatins A and B. In Purpureocillium lilacinum (Paecilomyces lilacinus), this protein is Probable thioesterase lcsE.